The sequence spans 88 residues: Small ribosomal subunit protein bS20 (88 aa).

This sequence belongs to the bacterial ribosomal protein bS20 family.

Its function is as follows. Binds directly to 16S ribosomal RNA. The polypeptide is Small ribosomal subunit protein bS20 (Coprothermobacter proteolyticus (strain ATCC 35245 / DSM 5265 / OCM 4 / BT)).